Reading from the N-terminus, the 733-residue chain is Phosphoribosylformylglycinamidine synthase subunit PurL (733 aa).

The active site involves H41. Positions 44 and 83 each coordinate ATP. Position 85 (E85) interacts with Mg(2+). Substrate is bound by residues S86–H89 and R108. H87 serves as the catalytic Proton acceptor. D109 is a binding site for Mg(2+). The interval G212–Q232 is disordered. Substrate is bound at residue Q232. D260 is a binding site for Mg(2+). Residue E304–Q306 participates in substrate binding. 2 residues coordinate ATP: D488 and G525. N526 serves as a coordination point for Mg(2+). A substrate-binding site is contributed by S528.

It belongs to the FGAMS family. As to quaternary structure, monomer. Part of the FGAM synthase complex composed of 1 PurL, 1 PurQ and 2 PurS subunits.

It is found in the cytoplasm. It carries out the reaction N(2)-formyl-N(1)-(5-phospho-beta-D-ribosyl)glycinamide + L-glutamine + ATP + H2O = 2-formamido-N(1)-(5-O-phospho-beta-D-ribosyl)acetamidine + L-glutamate + ADP + phosphate + H(+). The protein operates within purine metabolism; IMP biosynthesis via de novo pathway; 5-amino-1-(5-phospho-D-ribosyl)imidazole from N(2)-formyl-N(1)-(5-phospho-D-ribosyl)glycinamide: step 1/2. Part of the phosphoribosylformylglycinamidine synthase complex involved in the purines biosynthetic pathway. Catalyzes the ATP-dependent conversion of formylglycinamide ribonucleotide (FGAR) and glutamine to yield formylglycinamidine ribonucleotide (FGAM) and glutamate. The FGAM synthase complex is composed of three subunits. PurQ produces an ammonia molecule by converting glutamine to glutamate. PurL transfers the ammonia molecule to FGAR to form FGAM in an ATP-dependent manner. PurS interacts with PurQ and PurL and is thought to assist in the transfer of the ammonia molecule from PurQ to PurL. This is Phosphoribosylformylglycinamidine synthase subunit PurL from Caldanaerobacter subterraneus subsp. tengcongensis (strain DSM 15242 / JCM 11007 / NBRC 100824 / MB4) (Thermoanaerobacter tengcongensis).